A 457-amino-acid polypeptide reads, in one-letter code: Dihydrolipoyl dehydrogenase (457 aa).

Residues 32-40 (EKEYFGGVC), Lys-49, and Ala-113 contribute to the FAD site. Cys-40 and Cys-45 are disulfide-bonded. Residues 178–182 (GGGVI), Val-235, and 262–265 (SIGR) contribute to the NAD(+) site. Residues Asp-303 and Ala-311 each coordinate FAD. The Proton acceptor role is filled by His-437.

This sequence belongs to the class-I pyridine nucleotide-disulfide oxidoreductase family. In terms of assembly, homodimer. Requires FAD as cofactor.

The protein localises to the cytoplasm. It catalyses the reaction N(6)-[(R)-dihydrolipoyl]-L-lysyl-[protein] + NAD(+) = N(6)-[(R)-lipoyl]-L-lysyl-[protein] + NADH + H(+). Its function is as follows. Lipoamide dehydrogenase is a component of the alpha-ketoacid dehydrogenase complexes. This is Dihydrolipoyl dehydrogenase (pdhD) from Mycoplasma pneumoniae (strain ATCC 29342 / M129 / Subtype 1) (Mycoplasmoides pneumoniae).